Reading from the N-terminus, the 398-residue chain is ATP-dependent (S)-NAD(P)H-hydrate dehydratase 1 (398 aa).

Residues 80–391 (LLRKAFQMIP…GYIGEAFELV (312 aa)) enclose the YjeF C-terminal domain. Residues G187 and 240-246 (NHVEFQR) contribute to the (6S)-NADPHX site. Residues 280-284 (KGSID) and 300-309 (GSPKRCGGQG) contribute to the ATP site. D310 contacts (6S)-NADPHX.

Belongs to the NnrD/CARKD family. Mg(2+) is required as a cofactor.

It localises to the cytoplasm. The catalysed reaction is (6S)-NADHX + ATP = ADP + phosphate + NADH + H(+). The enzyme catalyses (6S)-NADPHX + ATP = ADP + phosphate + NADPH + H(+). In terms of biological role, catalyzes the dehydration of the S-form of NAD(P)HX at the expense of ATP, which is converted to ADP. Together with NAD(P)HX epimerase, which catalyzes the epimerization of the S- and R-forms, the enzyme allows the repair of both epimers of NAD(P)HX, a damaged form of NAD(P)H that is a result of enzymatic or heat-dependent hydration. This is ATP-dependent (S)-NAD(P)H-hydrate dehydratase 1 from Puccinia graminis f. sp. tritici (strain CRL 75-36-700-3 / race SCCL) (Black stem rust fungus).